A 324-amino-acid polypeptide reads, in one-letter code: MNGVLYITFTVILSVEVIIGNFGNGIIALVNIMDLAKRRKISSVDQILTALAISRIVLLWLVLVSWWLSMFYPGQWMTEGIDVIVHNVWTTLNQISLWLATSFSVFCFLKVANFSNTIFFYLKIRVKKVMTGTLIMFLLLLGLNIIVINASKTILIPEYKVNMSNSLNLKNTQISMLFPFANTLFGFIPFAVSLVTFLLLFFSLWKHQRKMHHGAQGCRDSSTKAHIRVLQTLIASILLYFVFFLSLVVKVWISLFLERMLLLLITQAAKIAFPSLHPWVLILGNAKLRKASLSALQWLRCRHKDEHRRVQRPEVHSCGSSCMP.

The Extracellular portion of the chain corresponds to 1-2; sequence MN. The helical transmembrane segment at 3–23 threads the bilayer; that stretch reads GVLYITFTVILSVEVIIGNFG. Topologically, residues 24 to 55 are cytoplasmic; that stretch reads NGIIALVNIMDLAKRRKISSVDQILTALAISR. The helical transmembrane segment at 56–76 threads the bilayer; it reads IVLLWLVLVSWWLSMFYPGQW. The Extracellular segment spans residues 77–94; sequence MTEGIDVIVHNVWTTLNQ. Residues 95 to 115 form a helical membrane-spanning segment; the sequence is ISLWLATSFSVFCFLKVANFS. Topologically, residues 116 to 128 are cytoplasmic; the sequence is NTIFFYLKIRVKK. Residues 129 to 149 form a helical membrane-spanning segment; that stretch reads VMTGTLIMFLLLLGLNIIVIN. Topologically, residues 150-183 are extracellular; sequence ASKTILIPEYKVNMSNSLNLKNTQISMLFPFANT. Asn-162 carries an N-linked (GlcNAc...) asparagine glycan. The helical transmembrane segment at 184–204 threads the bilayer; the sequence is LFGFIPFAVSLVTFLLLFFSL. At 205-236 the chain is on the cytoplasmic side; the sequence is WKHQRKMHHGAQGCRDSSTKAHIRVLQTLIAS. Residues 237–257 form a helical membrane-spanning segment; it reads ILLYFVFFLSLVVKVWISLFL. Topologically, residues 258–261 are extracellular; the sequence is ERML. The helical transmembrane segment at 262-282 threads the bilayer; that stretch reads LLLITQAAKIAFPSLHPWVLI. Topologically, residues 283-324 are cytoplasmic; the sequence is LGNAKLRKASLSALQWLRCRHKDEHRRVQRPEVHSCGSSCMP.

It belongs to the G-protein coupled receptor T2R family.

The protein resides in the membrane. Its function is as follows. Putative taste receptor which may play a role in the perception of bitterness. The sequence is that of Taste receptor type 2 member 116 from Rattus norvegicus (Rat).